The primary structure comprises 119 residues: Ribosome-binding factor A (119 aa).

Belongs to the RbfA family. In terms of assembly, monomer. Binds 30S ribosomal subunits, but not 50S ribosomal subunits or 70S ribosomes.

The protein localises to the cytoplasm. One of several proteins that assist in the late maturation steps of the functional core of the 30S ribosomal subunit. Associates with free 30S ribosomal subunits (but not with 30S subunits that are part of 70S ribosomes or polysomes). Required for efficient processing of 16S rRNA. May interact with the 5'-terminal helix region of 16S rRNA. The protein is Ribosome-binding factor A of Chlorobium luteolum (strain DSM 273 / BCRC 81028 / 2530) (Pelodictyon luteolum).